The primary structure comprises 405 residues: ATP phosphoribosyltransferase regulatory subunit (405 aa).

It belongs to the class-II aminoacyl-tRNA synthetase family. HisZ subfamily. Heteromultimer composed of HisG and HisZ subunits.

The protein localises to the cytoplasm. It participates in amino-acid biosynthesis; L-histidine biosynthesis; L-histidine from 5-phospho-alpha-D-ribose 1-diphosphate: step 1/9. In terms of biological role, required for the first step of histidine biosynthesis. May allow the feedback regulation of ATP phosphoribosyltransferase activity by histidine. This chain is ATP phosphoribosyltransferase regulatory subunit, found in Microcystis aeruginosa (strain NIES-843 / IAM M-2473).